Consider the following 391-residue polypeptide: Mannose-6-phosphate isomerase (391 aa).

Residues glutamine 97, histidine 99, glutamate 134, and histidine 255 each coordinate Zn(2+). The active site involves arginine 274.

The protein belongs to the mannose-6-phosphate isomerase type 1 family. It depends on Zn(2+) as a cofactor.

The protein resides in the cytoplasm. It catalyses the reaction D-mannose 6-phosphate = D-fructose 6-phosphate. Its function is as follows. Involved in the conversion of glucose to GDP-L-fucose, which can be converted to L-fucose, a capsular polysaccharide. This chain is Mannose-6-phosphate isomerase (manA), found in Salmonella typhimurium (strain LT2 / SGSC1412 / ATCC 700720).